Here is a 445-residue protein sequence, read N- to C-terminus: MAVEIVKSSMVTAGEATPEHRIWLSNLDLLVARSHTPTVYVYRRTGPDSDAAFFSPDVLKAALSKVLVPFYPLAGRLAQDSAGRPEISCTGEGVLFVTARSGATIDDLGDLAPSDELRRMLVPAADVAAASILAMFQVTFFRCGGVCLGAAIHHTAADGLAALDFVNTWAAIARDVAGDGEAAAAAVQRPWLDRTLLRARSPPAVRFDHAEYSRRRGGGSKLPFDSAILPMSKNQLNALKGAGAGAGKRLSTFTAVVAHVWRCACKARGLAVAGTEAATRLYMTADARTRLHPPLPRGYLGNAIFRASAVSKVSDIVAAGPLGAVAEKVSAATARLDDGYVRSLLDHLEQTAAAASGGAAGLRKGEWVMPESDLWVISWQGLPLYDADFGWGRPAFMGRACLQFSGLVYLVPGRDDGDGRLDVVVAMDPESLAKFKDVFYEELKC.

Residues histidine 154 and aspartate 388 each act as proton acceptor in the active site.

The protein belongs to the plant acyltransferase family. Expressed in leaves.

Its function is as follows. Hydroxycinnamoyl transferase that catalyzes the transfer of an acyl from p-coumaryol-CoA to putrescine, to produce coumaroyl putrescine. In Oryza sativa subsp. japonica (Rice), this protein is Putrescine hydroxycinnamoyltransferase 1.